A 272-amino-acid chain; its full sequence is DNA repair protein RecO (272 aa).

Belongs to the RecO family.

Involved in DNA repair and RecF pathway recombination. This chain is DNA repair protein RecO, found in Latilactobacillus sakei subsp. sakei (strain 23K) (Lactobacillus sakei subsp. sakei).